A 210-amino-acid polypeptide reads, in one-letter code: Large ribosomal subunit protein uL3 (210 aa).

The interval 123 to 144 is disordered; sequence KRHGQSRGPMAHGSRYHRRPGS.

This sequence belongs to the universal ribosomal protein uL3 family. In terms of assembly, part of the 50S ribosomal subunit. Forms a cluster with proteins L14 and L19.

Its function is as follows. One of the primary rRNA binding proteins, it binds directly near the 3'-end of the 23S rRNA, where it nucleates assembly of the 50S subunit. This Alkaliphilus metalliredigens (strain QYMF) protein is Large ribosomal subunit protein uL3.